The following is a 326-amino-acid chain: Protein GVP36 (326 aa).

Ser-2 is subject to N-acetylserine. Ser-2 bears the Phosphoserine mark. Glycyl lysine isopeptide (Lys-Gly) (interchain with G-Cter in ubiquitin) cross-links involve residues Lys-13, Lys-305, and Lys-313. Positions 299–326 are disordered; that stretch reads AEEPEAKPEVAEEEKPQTAISMNDEDDA. The span at 302 to 314 shows a compositional bias: basic and acidic residues; the sequence is PEAKPEVAEEEKP. Ser-319 carries the post-translational modification Phosphoserine.

The protein localises to the golgi apparatus membrane. This Saccharomyces cerevisiae (strain ATCC 204508 / S288c) (Baker's yeast) protein is Protein GVP36 (GVP36).